The following is a 362-amino-acid chain: GDSL esterase/lipase At5g45670 (362 aa).

The signal sequence occupies residues 1–23; it reads MARMSLMIMMIMVAVTMINIAKS. The active-site Nucleophile is Ser36. Active-site residues include Asp326 and His329.

It belongs to the 'GDSL' lipolytic enzyme family.

Its subcellular location is the secreted. In Arabidopsis thaliana (Mouse-ear cress), this protein is GDSL esterase/lipase At5g45670.